A 563-amino-acid chain; its full sequence is Arginine--tRNA ligase (563 aa).

The 'HIGH' region motif lies at Pro-120–His-130.

This sequence belongs to the class-I aminoacyl-tRNA synthetase family. As to quaternary structure, monomer.

The protein resides in the cytoplasm. It catalyses the reaction tRNA(Arg) + L-arginine + ATP = L-arginyl-tRNA(Arg) + AMP + diphosphate. The sequence is that of Arginine--tRNA ligase from Clostridium botulinum (strain Langeland / NCTC 10281 / Type F).